A 102-amino-acid chain; its full sequence is NADH-quinone oxidoreductase subunit K (102 aa).

3 helical membrane-spanning segments follow: residues 5–25 (LGHYLAVAAMLFTLGILGIFL), 30–50 (IIVILMSVELILLAVNINLVA), and 62–82 (VFALLVLTVAAAEAAIGLAVL).

It belongs to the complex I subunit 4L family. As to quaternary structure, NDH-1 is composed of 14 different subunits. Subunits NuoA, H, J, K, L, M, N constitute the membrane sector of the complex.

Its subcellular location is the cell inner membrane. It catalyses the reaction a quinone + NADH + 5 H(+)(in) = a quinol + NAD(+) + 4 H(+)(out). Functionally, NDH-1 shuttles electrons from NADH, via FMN and iron-sulfur (Fe-S) centers, to quinones in the respiratory chain. The immediate electron acceptor for the enzyme in this species is believed to be ubiquinone. Couples the redox reaction to proton translocation (for every two electrons transferred, four hydrogen ions are translocated across the cytoplasmic membrane), and thus conserves the redox energy in a proton gradient. This is NADH-quinone oxidoreductase subunit K from Bradyrhizobium sp. (strain BTAi1 / ATCC BAA-1182).